The following is a 622-amino-acid chain: Iron transport multicopper oxidase FET3 (622 aa).

Positions 1 to 22 (MRPKLLSVEAALFLALPELARA) are cleaved as a signal peptide. The Extracellular segment spans residues 23-553 (ATRKFDFEIG…NTLPPGFTPR (531 aa)). 3 consecutive Plastocyanin-like domains span residues 31–146 (IGWV…VHDK), 156–303 (EEVV…VYDK), and 363–498 (YTEA…VEDP). Asparagine 76 carries N-linked (GlcNAc...) asparagine glycosylation. Cu cation contacts are provided by histidine 82 and histidine 84. Asparagine 89 and asparagine 114 each carry an N-linked (GlcNAc...) asparagine glycan. Residues histidine 126 and histidine 128 each contribute to the Cu cation site. Residues asparagine 196, asparagine 200, and asparagine 294 are each glycosylated (N-linked (GlcNAc...) asparagine). Cu cation contacts are provided by histidine 414, histidine 417, and histidine 419. An N-linked (GlcNAc...) asparagine glycan is attached at asparagine 440. Cu cation contacts are provided by histidine 479, cysteine 480, histidine 481, and histidine 485. The helical transmembrane segment at 554-574 (GIVALVFSCICGILGVAVVAW) threads the bilayer. Residues 575–622 (YGFSAPVGSTSAGALSAGLVENDSGDVHSAQKGPQETVVSPTGDARSH) are Cytoplasmic-facing. A disordered region spans residues 597-622 (DSGDVHSAQKGPQETVVSPTGDARSH).

Belongs to the multicopper oxidase family.

The protein resides in the cell membrane. Its function is as follows. Cell surface ferroxidase; part of the reductive iron assimilatory system (RIA), a siderophore-independent iron acquisition process. Required to oxidize Fe(2+) and release it from the transporter. Seems not to be involved in virulence. The protein is Iron transport multicopper oxidase FET3 of Gibberella zeae (strain ATCC MYA-4620 / CBS 123657 / FGSC 9075 / NRRL 31084 / PH-1) (Wheat head blight fungus).